The primary structure comprises 693 residues: Exocyst complex component 7 (693 aa).

A Phosphoserine modification is found at Ser236. The disordered stretch occupies residues 236-259 (SWGHEALRPRHSGRQTEPKKTTSA).

This sequence belongs to the EXO70 family. As to quaternary structure, the exocyst complex is composed of Sec3/Exoc1, Sec5/Exoc2, Sec6/Exoc3, Sec8/Exoc4, Sec10/Exoc5, Sec15/Exoc6, Exo70/Exoc7 and Exo84/Exoc8.

Required for exocytosis. Thought to function in intracellular vesicle targeting and docking before SNARE complex formation. The polypeptide is Exocyst complex component 7 (Drosophila melanogaster (Fruit fly)).